Reading from the N-terminus, the 290-residue chain is Arylamine N-acetyltransferase 2 (290 aa).

The active-site Acyl-thioester intermediate is cysteine 68. CoA contacts are provided by threonine 103 and glycine 104. 106-107 contacts substrate; the sequence is VH. Catalysis depends on residues histidine 107 and aspartate 122. CoA is bound by residues tyrosine 208, threonine 214, and serine 287.

The protein belongs to the arylamine N-acetyltransferase family.

The protein resides in the cytoplasm. The catalysed reaction is an arylamine + acetyl-CoA = an N-acetylarylamine + CoA. The enzyme catalyses an N-hydroxyarylamine + acetyl-CoA = an N-acetoxyarylamine + CoA. Catalyzes the N- or O-acetylation of various arylamine and heterocyclic amine substrates. Participates in the detoxification of a plethora of hydrazine and arylamine drugs, and is able to bioactivate several known carcinogens. The protein is Arylamine N-acetyltransferase 2 (NAT2) of Homo sapiens (Human).